Reading from the N-terminus, the 353-residue chain is Alanine racemase (353 aa).

K34 functions as the Proton acceptor; specific for D-alanine in the catalytic mechanism. Residue K34 is modified to N6-(pyridoxal phosphate)lysine. Position 128 (R128) interacts with substrate. Y251 serves as the catalytic Proton acceptor; specific for L-alanine. M299 serves as a coordination point for substrate.

The protein belongs to the alanine racemase family. Pyridoxal 5'-phosphate is required as a cofactor.

It catalyses the reaction L-alanine = D-alanine. It functions in the pathway amino-acid biosynthesis; D-alanine biosynthesis; D-alanine from L-alanine: step 1/1. In terms of biological role, catalyzes the interconversion of L-alanine and D-alanine. May also act on other amino acids. The sequence is that of Alanine racemase (alr) from Alcanivorax borkumensis (strain ATCC 700651 / DSM 11573 / NCIMB 13689 / SK2).